The primary structure comprises 222 residues: UPF0758 protein YicR (222 aa).

The MPN domain occupies 100 to 222 (PLLSPEMTRE…NVSFAERGWI (123 aa)). Zn(2+)-binding residues include histidine 171, histidine 173, and aspartate 184. The JAMM motif signature appears at 171–184 (HNHPSGCAEPSKAD).

Belongs to the UPF0758 family. YicR subfamily.

This Shigella boydii serotype 18 (strain CDC 3083-94 / BS512) protein is UPF0758 protein YicR.